The primary structure comprises 501 residues: uncharacterized protein (501 aa).

The next 7 helical transmembrane spans lie at 14-34 (AIFI…SGSV), 73-93 (FILF…LGYM), 111-131 (IFGI…ICIF), 197-217 (FIIA…VLLI), 274-294 (ILLS…YYFG), 297-317 (FNLI…YNLI), and 466-486 (FLVL…RLIL).

Its subcellular location is the membrane. This is an uncharacterized protein from Dictyostelium discoideum (Social amoeba).